The sequence spans 385 residues: MRILKSHPLLKILNSYLIDSPQPSNISYLWNFGSLLGLCLGIQIVTGVTLAMHYTPSVLEAFNSVEHIMRDVNNGWLVRYLHSNTASAFFFLVYLHIGRGLYYGSYKSPRTLTWAIGTVILIVMMATAFLGYVLPYGQMSLWGATVITNLMSAIPWIGQDIVEFIWGGFSVNNATLNRFFALHFLLPFVLAALVIMHLIAMHDTVGSGNPLGISGNYDRLPFAPYFVFKDLVTIFIFFIVLSIFVFFMPNALGDSENYVMANPMQTPPAIVPEWYLLPFYAILRSIPNKLLGVIAMFAAILALMVMPITDLSKLRGVQFRPLSKVAFYVFVANFLILMQIGAKHVETPFIEFGQISTVLYFAHFFVIVPVVSLIENSLVELTTKK.

4 helical membrane-spanning segments follow: residues 32 to 52, 76 to 98, 113 to 133, and 179 to 199; these read FGSL…TLAM, WLVR…LHIG, TWAI…LGYV, and FFAL…MHLI. Residues His-82 and His-96 each contribute to the heme b site. 2 residues coordinate heme b: His-183 and His-197. His-202 lines the a ubiquinone pocket. A run of 4 helical transmembrane segments spans residues 226-246, 290-310, 322-342, and 349-369; these read FVFK…IFVF, LLGV…PITD, LSKV…QIGA, and FIEF…VIVP.

Belongs to the cytochrome b family. In terms of assembly, fungal cytochrome b-c1 complex contains 10 subunits; 3 respiratory subunits, 2 core proteins and 5 low-molecular weight proteins. Cytochrome b-c1 complex is a homodimer. Requires heme b as cofactor.

The protein resides in the mitochondrion inner membrane. Its function is as follows. Component of the ubiquinol-cytochrome c reductase complex (complex III or cytochrome b-c1 complex) that is part of the mitochondrial respiratory chain. The b-c1 complex mediates electron transfer from ubiquinol to cytochrome c. Contributes to the generation of a proton gradient across the mitochondrial membrane that is then used for ATP synthesis. This is Cytochrome b (cob) from Aspergillus terreus (strain NIH 2624 / FGSC A1156).